Consider the following 262-residue polypeptide: MRGRSYTPSPPRGYGRRGRSPSPRGRFGGSRDSDLPTSLLVRNLRHDCRQEDLRRPFEQFGPVKDIYLPRDYYTGDPRGFGFIQFMDPADAAEAKHQMDGYLLLGRELTVVFAEENRKKPTEMRTRDRGGRSNRFQDRRRSPPRYSRSPPPRRGRRSRSRSRGYNSPPAKRHQSRSVSPQDRRYEKERSYSRSPPHNGSRVRSGSPGRVKSHSRSPRRSVSPRKNRSYTPEQARSQSPVPRQSRSPTPVPRGAQNGDRSPSQ.

Disordered stretches follow at residues 1–38 (MRGR…LPTS) and 115–262 (ENRK…SPSQ). Phosphoserine occurs at positions 9 and 20. The region spanning 37 to 115 (TSLLVRNLRH…RELTVVFAEE (79 aa)) is the RRM domain. The segment covering 115–140 (ENRKKPTEMRTRDRGGRSNRFQDRRR) has biased composition (basic and acidic residues). Basic residues predominate over residues 150–161 (PPRRGRRSRSRS). A phosphoserine mark is found at serine 166, serine 174, serine 176, and serine 178. The span at 180-190 (QDRRYEKERSY) shows a compositional bias: basic and acidic residues. Phosphoserine occurs at positions 191 and 193. Over residues 209–226 (VKSHSRSPRRSVSPRKNR) the composition is skewed to basic residues. The segment covering 234–246 (RSQSPVPRQSRSP) has biased composition (low complexity). Phosphoserine is present on residues serine 235, serine 259, and serine 261.

Belongs to the splicing factor SR family. SCL subfamily. Component of the spliceosome. Interacts with SNRNP35, CYP59 and RS2Z33.

It localises to the nucleus speckle. In terms of biological role, involved in intron recognition and spliceosome assembly. Binds probably to multiple 5'-GAAG-3' repeats found in its third intron, suggesting autoregulation of alternative splicing. May be necessary for accurate splicing of the 3' region of introns. The protein is Serine/arginine-rich SC35-like splicing factor SCL30A (SCL30A) of Arabidopsis thaliana (Mouse-ear cress).